The primary structure comprises 405 residues: CMP-sialic acid transporter 4 (405 aa).

Residues 1–43 are Cytoplasmic-facing; sequence MQRNGVMECSVCHSKVVAPSPRSVSRAYDKHRSKISSKYRALN. A helical membrane pass occupies residues 44 to 64; it reads FLLVSGDCILVGLQPILVFMS. Residues 65 to 74 are Lumenal-facing; it reads KVDGKFQFSP. Residues 75–95 form a helical membrane-spanning segment; it reads ISVNFLTEVTKVIFAIVMLII. Topologically, residues 96–121 are cytoplasmic; the sequence is QSRKQKVGEKPLLSLSTFVQAARNNA. A helical membrane pass occupies residues 122-142; that stretch reads LLAVPALLYAINNYLKFIMQL. Position 143 (Tyr143) is a topological domain, lumenal. A helical membrane pass occupies residues 144–164; that stretch reads FSPATVKMLSNLKVLVIAILL. Over 165–171 the chain is Cytoplasmic; that stretch reads KFIMRRK. The helical transmembrane segment at 172–192 threads the bilayer; sequence FSIIQWEALALLLIGISVNQL. The Lumenal portion of the chain corresponds to 193–203; that stretch reads SSIPDGTKSFG. A helical membrane pass occupies residues 204-224; that stretch reads LAVTTIAYIYTLIFVTVPSLA. At 225–244 the chain is on the cytoplasmic side; it reads SVYNEYALKSQFDTSIYLQN. Residues 245–265 traverse the membrane as a helical segment; sequence LFLYGYGAIFNFLGILGTVIF. The Lumenal segment spans residues 266 to 281; it reads QGPESFDILRGHSRAT. Residues 282–302 form a helical membrane-spanning segment; that stretch reads MFLICNNAAQGILSSFFFKYA. Over 303–322 the chain is Cytoplasmic; it reads DTILKKYSSTVATIFTGLAS. Residues 323–343 form a helical membrane-spanning segment; it reads AAFLGHTLTVNFLLGISIVFI. The Lumenal segment spans residues 344–405; the sequence is SMHQFFSPLA…TDERKPLLPI (62 aa).

The protein belongs to the nucleotide-sugar transporter family. CMP-Sialate:CMP antiporter (TC 2.A.7.12) subfamily.

The protein resides in the golgi apparatus membrane. In terms of biological role, sugar transporter involved in the transport of CMP-sialic acid from the cytoplasm into the Golgi. May transport important nucleotide sugars such as CMP-Kdo (2-keto-3-deoxy-D-manno-octulosonic acid) in physiological conditions. The chain is CMP-sialic acid transporter 4 from Oryza sativa subsp. japonica (Rice).